Consider the following 567-residue polypeptide: Urease subunit alpha (567 aa).

In terms of domain architecture, Urease spans 129 to 567; it reads GGIDVHVHFI…VPMSQRYFLF (439 aa). Ni(2+)-binding residues include His134, His136, and Lys217. Residue Lys217 is modified to N6-carboxylysine. His219 serves as a coordination point for substrate. Residues His246 and His272 each coordinate Ni(2+). The active-site Proton donor is His320. Asp360 lines the Ni(2+) pocket.

This sequence belongs to the metallo-dependent hydrolases superfamily. Urease alpha subunit family. As to quaternary structure, heterotrimer of UreA (gamma), UreB (beta) and UreC (alpha) subunits. Three heterotrimers associate to form the active enzyme. Ni cation is required as a cofactor. Carboxylation allows a single lysine to coordinate two nickel ions.

It is found in the cytoplasm. The enzyme catalyses urea + 2 H2O + H(+) = hydrogencarbonate + 2 NH4(+). Its pathway is nitrogen metabolism; urea degradation; CO(2) and NH(3) from urea (urease route): step 1/1. The chain is Urease subunit alpha from Blochmanniella floridana.